A 285-amino-acid chain; its full sequence is Undecaprenyl-diphosphatase 2 (285 aa).

8 helical membrane passes run 5-25, 47-67, 86-106, 122-142, 156-176, 198-218, 235-255, and 265-285; these read MDLLHVFILAVIQGLAELLPV, MTFLLVMLHTGTMFAVIVYFW, WYVLLATAITGVLGLLLQSLI, LFSNSKLMAAALAAAGILIIL, LPSAMIIGAVQALCLPFRGFS, FSFALAVVLTPAVIVKELVRL, SLLLPSIFGMVFSFLTGLLAL, and GRWYLFGIYCLAFSGVVLTLA.

Belongs to the UppP family.

The protein localises to the cell inner membrane. It carries out the reaction di-trans,octa-cis-undecaprenyl diphosphate + H2O = di-trans,octa-cis-undecaprenyl phosphate + phosphate + H(+). Catalyzes the dephosphorylation of undecaprenyl diphosphate (UPP). Confers resistance to bacitracin. This is Undecaprenyl-diphosphatase 2 from Acinetobacter baylyi (strain ATCC 33305 / BD413 / ADP1).